A 181-amino-acid chain; its full sequence is Large ribosomal subunit protein uL5 (181 aa).

Belongs to the universal ribosomal protein uL5 family. As to quaternary structure, part of the 50S ribosomal subunit; part of the 5S rRNA/L5/L18/L25 subcomplex. Contacts the 5S rRNA and the P site tRNA. Forms a bridge to the 30S subunit in the 70S ribosome.

Its function is as follows. This is one of the proteins that bind and probably mediate the attachment of the 5S RNA into the large ribosomal subunit, where it forms part of the central protuberance. In the 70S ribosome it contacts protein S13 of the 30S subunit (bridge B1b), connecting the 2 subunits; this bridge is implicated in subunit movement. Contacts the P site tRNA; the 5S rRNA and some of its associated proteins might help stabilize positioning of ribosome-bound tRNAs. The chain is Large ribosomal subunit protein uL5 from Helicobacter acinonychis (strain Sheeba).